Reading from the N-terminus, the 245-residue chain is MRVDGREVRELRHVHIHTNYLKHPEGSVLIEVGDTKVICSATVEERVPPFMRGEGKGWVTAEYAMIPRATEQRTIRESSKGKVTGRTMEIQRLIGRALRAVVDLEVLGERTVWIDCDVIQADGGTRTASITGAYVAMVLAFEKLLQAEKVTKIPVKDYLAATSVGILEEQGVVLDLNYAEDSKADVDMNVIMTGKGHFVEVQGTGEEATFSRAQLNELLDAAEHGILQLIEKQKEALGDIVSHIE.

Phosphate-binding positions include Arg86 and 124–126 (GTR).

The protein belongs to the RNase PH family. Homohexameric ring arranged as a trimer of dimers.

It catalyses the reaction tRNA(n+1) + phosphate = tRNA(n) + a ribonucleoside 5'-diphosphate. Functionally, phosphorolytic 3'-5' exoribonuclease that plays an important role in tRNA 3'-end maturation. Removes nucleotide residues following the 3'-CCA terminus of tRNAs; can also add nucleotides to the ends of RNA molecules by using nucleoside diphosphates as substrates, but this may not be physiologically important. Probably plays a role in initiation of 16S rRNA degradation (leading to ribosome degradation) during starvation. This chain is Ribonuclease PH, found in Bacillus cytotoxicus (strain DSM 22905 / CIP 110041 / 391-98 / NVH 391-98).